A 198-amino-acid polypeptide reads, in one-letter code: Probable chemoreceptor glutamine deamidase CheD (198 aa).

This sequence belongs to the CheD family.

It catalyses the reaction L-glutaminyl-[protein] + H2O = L-glutamyl-[protein] + NH4(+). Functionally, probably deamidates glutamine residues to glutamate on methyl-accepting chemotaxis receptors (MCPs), playing an important role in chemotaxis. The protein is Probable chemoreceptor glutamine deamidase CheD of Xanthomonas euvesicatoria pv. vesicatoria (strain 85-10) (Xanthomonas campestris pv. vesicatoria).